We begin with the raw amino-acid sequence, 67 residues long: Archaeal histone HAN1 subunit A (67 aa).

Interaction with DNA stretches follow at residues R20–S22 and K54–K57.

It belongs to the archaeal histone HMF family. Heterodimer. Dimers then assemble into higher oligomers, with the DNA wrapped around the protein core.

It localises to the cytoplasm. It is found in the chromosome. Functionally, binds and compact DNA (95 to 150 base pairs) to form nucleosome-like structures that contain positive DNA supercoils. Increases the resistance of DNA to thermal denaturation (in vitro). The chain is Archaeal histone HAN1 subunit A (han1A) from Thermococcus zilligii.